A 574-amino-acid chain; its full sequence is Intraflagellar transport protein 56 homolog (574 aa).

TPR repeat units follow at residues 20–52 (AQKM…GNLD), 57–90 (DSLQ…DDAP), and 151–184 (LEDR…SPNL).

Belongs to the IFT56 family. In terms of assembly, component of the IFT complex B composed of at least che-2, che-13, dyf-1, dyf-3, dyf-6, dyf-11, dyf-13, ift-20, ift-74, ift-81, ifta-2, osm-1, osm-5 and osm-6.

The protein resides in the cell projection. Its subcellular location is the cilium. In terms of biological role, component of the intraflagellar transport (IFT) complex B required for transport of proteins in the motile cilium. May be required for ciliary entrance and transport of specific ciliary cargo proteins such as che-3 which are related to motility. This Caenorhabditis elegans protein is Intraflagellar transport protein 56 homolog.